The primary structure comprises 329 residues: Chloroplast envelope quinone oxidoreductase homolog (329 aa).

Arg-58 contacts substrate.

Belongs to the zinc-containing alcohol dehydrogenase family. Quinone oxidoreductase subfamily. As to quaternary structure, homodimer or homotetramer. Transition to monomer upon NADPH binding. Interacts with calmodulin. Interacts with HP30-1, HP30-2 and HP20.

Its subcellular location is the plastid. The protein resides in the chloroplast inner membrane. Functionally, NADPH-dependent alpha,beta-unsaturated oxoene reductase reducing the double bond of medium-chain (C9) to long-chain (C18) reactive electrophile species deriving from poly-unsaturated fatty acid peroxides. The best substrates are 13-lipoxygenase-derived gamma-ketols, but is unable to reduce the double bond of short-chain alkenals and alkenones such as acrolein, crotonaldehyde, 3-buten-2-one, 4-hexen-3-one and trans-2-hexenal, or quinones such as duroquinone, decylubiquinone, coenzyme Q0, menadione, menaquinone and phylloquinone. Can use trans-2-nonenal, trans-3-decen-2-one, 4-hydroxynonenal, 12-oxo-10(E) dodecanoate (traumatin), 4-oxononenal, trans-1,3 diphenyl-2-propenone, trans-1,4-diphenyl-2-butene-1,4-dione, 9-oxo-12,13-epoxy-(10E)-octadecenoic acid (trans-EKODE-1b), 9-hydroxy-12-oxo-10(E)-octadecenoic acid, 9-Hydroxy-12-oxo-10(E),15(Z)-octadecadienoic acid and 9,13-dihydroxy-10-oxo-11-octadecenoic acid as substrates, but has no activity with 13(R,S)-hydroperoxy-9(Z),11(E)-octadecadienoic acid (13-HPOD), 9(S),12(S),13(S)-trihydroxy-10(E)-octadecenoic acid, 13-hydroxy-12-oxo-9(Z)-octadecenoic acid, 9-oxo-10(E),12(Z)-octadecadienoic acid (9-KODE), 13-oxo-9(Z),11(E)-octadecadienoic acid (13-KODE) and 12-oxo-10,15(Z)-phytodienoic acid (12-OPDA). The sequence is that of Chloroplast envelope quinone oxidoreductase homolog from Arabidopsis thaliana (Mouse-ear cress).